A 222-amino-acid polypeptide reads, in one-letter code: Small ribosomal subunit protein uS7m (222 aa).

The transit peptide at 1–14 (MTTKLARFAQKRWI) directs the protein to the mitochondrion.

This sequence belongs to the universal ribosomal protein uS7 family. Component of the mitochondrial ribosome small subunit (28S) which comprises a 12S rRNA and about 30 distinct proteins.

It is found in the mitochondrion. In Caenorhabditis elegans, this protein is Small ribosomal subunit protein uS7m (mrps-7).